A 298-amino-acid polypeptide reads, in one-letter code: UDP-N-acetylenolpyruvoylglucosamine reductase (298 aa).

Positions 26-191 constitute an FAD-binding PCMH-type domain; sequence KTGGPADWLA…LDATFALEPG (166 aa). Residue Arg-170 is part of the active site. Catalysis depends on Ser-220, which acts as the Proton donor. The active site involves Glu-290.

This sequence belongs to the MurB family. It depends on FAD as a cofactor.

It is found in the cytoplasm. The enzyme catalyses UDP-N-acetyl-alpha-D-muramate + NADP(+) = UDP-N-acetyl-3-O-(1-carboxyvinyl)-alpha-D-glucosamine + NADPH + H(+). The protein operates within cell wall biogenesis; peptidoglycan biosynthesis. Cell wall formation. The chain is UDP-N-acetylenolpyruvoylglucosamine reductase from Limosilactobacillus reuteri subsp. reuteri (strain JCM 1112) (Lactobacillus reuteri).